Reading from the N-terminus, the 114-residue chain is Apokedarcidin (114 aa).

Intrachain disulfides connect Cys37-Cys47 and Cys88-Cys95.

This sequence belongs to the neocarzinostatin family.

Functionally, binds non-covalently to an enediyne chromophore which is the cytotoxic and mutagenic component of the antibiotic. The chromophore cleaves duplex DNA site-specifically in a single-stranded manner. The apoprotein cleaves proteins selectively, in particular highly basic histones, with H1 proteins being cleaved the more readily. This is Apokedarcidin from Actinomycete sp. (strain L585-6 / ATCC 53650).